We begin with the raw amino-acid sequence, 228 residues long: Eukaryotic translation initiation factor 4E-2 (228 aa).

Cys130 and Cys134 are joined by a disulfide.

The protein belongs to the eukaryotic initiation factor 4E family. EIF4F is a multi-subunit complex, the composition of which varies with external and internal environmental conditions. It is composed of at least eIF4A, eIF4E and eIF4G. eIF4E is also known to interact with other partners. As to expression, highly expressed in all somatic tissues.

Its function is as follows. Recognizes and binds the 7-methylguanosine-containing mRNA cap during an early step in the initiation of protein synthesis and facilitates ribosome binding by inducing the unwinding of the mRNAs secondary structures. All 5 eIF4E proteins bind monomethyl cap structures. Only ife-1, ife-2 and ife-5 bind trimethyl cap structures which result from trans-splicing. Translation of trimethyl cap structure mRNAs may be regulated by intracellular redox state; disulfide bonds change the width and depth of the cap-binding cavity determining selectivity to mRNA caps. Probably by regulating mRNA translation in somatic cells, negatively regulates lifespan independently of daf-2/insulin and let-363/TOR pathways. Negatively regulates resistance to oxidative stress. May play a role in embryonic development. This Caenorhabditis elegans protein is Eukaryotic translation initiation factor 4E-2 (ife-2).